A 187-amino-acid polypeptide reads, in one-letter code: MITDRKAKAKPERGVEELLEYLGEDLTKPGVLNTPKRFVKAMEELTRGLREPPPEVVFFPLEYDVELGPVVIENIGAVSLCEHHLLPILLRISVAYVPGDGVPGLSKVIRLVKWAAARPIMQERFTEWLADLLMEKLRAKGVQVKVCGVHMCSFIRGVKDEHHNMITEARRGEIDVKLSCKRPLGCR.

Cysteine 81, histidine 84, and cysteine 152 together coordinate Zn(2+).

Belongs to the GTP cyclohydrolase I family. Toroid-shaped homodecamer, composed of two pentamers of five dimers.

The enzyme catalyses GTP + H2O = 7,8-dihydroneopterin 3'-triphosphate + formate + H(+). The protein operates within cofactor biosynthesis; 7,8-dihydroneopterin triphosphate biosynthesis; 7,8-dihydroneopterin triphosphate from GTP: step 1/1. The polypeptide is GTP cyclohydrolase 1 (Pyrobaculum aerophilum (strain ATCC 51768 / DSM 7523 / JCM 9630 / CIP 104966 / NBRC 100827 / IM2)).